The sequence spans 472 residues: MSIGAEIDSLVPAPPGLNGTAAGYPAKTQKELSNGDFDAHDGLSLAQLTPYDVLTAALPLPAPASSTGFWWRETGPVMSKLLAKANYPLYTHYKYLMLYHTHILPLLGPRPPLENSTHPSPSNAPWRSFLTDDFTPLEPSWNVNGNSEAQSTIRLGIEPIGFEAGAAADPFNQAAVTQFMHSYEATEVGATLTLFEHFRNDMFVGPETYAALRAKIPEGEHTTQSFLAFDLDAGRVTTKAYFFPILMSLKTGQSTTKVVSDSILHLALKSEVWGVQTIAAMSVMEAWIGSYGGAAKTEMISVDCVNEADSRIKIYVRMPHTSLRKVKEAYCLGGRLTDENTKEGLKLLDELWRTVFGIDDEDAELPQNSHRTAGTIFNFELRPGKWFPEPKVYLPVRHYCESDMQIASRLQTFFGRLGWHNMEKDYCKHLEDLFPHHPLSSSTGTHTFLSFSYKKQKGVYMTMYYNLRVYST.

Glu138 is a binding site for L-tryptophan. Dimethylallyl diphosphate is bound by residues Arg154, Lys239, Tyr241, Lys313, Tyr315, Tyr393, Tyr460, and Tyr464.

Belongs to the tryptophan dimethylallyltransferase family. As to quaternary structure, homodimer.

The enzyme catalyses L-tryptophan + dimethylallyl diphosphate = 7-(3-methylbut-2-enyl)-L-tryptophan + diphosphate. It carries out the reaction an N-terminal L-tryptophanyl-L-alpha-aminoacyl-[peptide] + H2O = an N-terminal L-alpha-aminoacyl-[peptide] + L-tryptophan. The protein operates within secondary metabolite biosynthesis. Its function is as follows. 7-dimethylallyltryptophan synthase; part of the gene cluster that mediates the biosynthesis of hexadehydro-astechrome (HAS), a tryptophan-derived iron(III)-complex that acts as a virulence factor in infected mice. Catalyzes the prenylation of L-tryptophan at the C-7 position of the indole moiety. The enzyme is specific for dimethylallyl diphosphate (DMAPP) as prenyl donor. Also accepts D-tryptophan, typtophan-derivatives with modifications at the side chain or the indole ring, and linear and cyclic dipeptides such as H-L-Trp-L-Gly-OH or cyclo-L-Trp-L-Gly as substrates, however with lower efficiency. Also has tryptophan aminopeptidase activity towards linear peptides with a tryptophanyl moiety at the N-terminus. Dipeptides are better substrates than peptides with 3 or more amino acids. Enzymatic rate constants however are much higher for the prenyltransferase activity than for the aminopeptidase activity. Within the hexadehydro-astechrome biosyntetic pathway, hasE catalyzes the prenylation of the hasD-tethered tryptophan or the resulting tethered Trp-Ala dipeptid. The HAS biosynthesis begins with the synthesis of a tethered Trp-Ala dipeptide by the NRPS hasD. The 7-dimethylallyltryptophan synthase hasE then catalyzes the prenylation of the hasD-tethered tryptophan or the resulting tethered Trp-Ala dipeptide at the C-7 position of the indole moiety. HAS biosynthesis continues via tethered intermediates with the succesive actions of the cytochrome P450 monooxygenase hasH, the O-methyltransferase hasC, and the FAD-linked oxidoreductase hasG. The resulting O-methylated diketopiperazine is then released from hasD. Finally, three O-methylated diketopiperazine molecules assemble in a trimeric complex with Fe(III) to produce hexadehydro-astechrome. This Aspergillus fumigatus (strain CBS 144.89 / FGSC A1163 / CEA10) (Neosartorya fumigata) protein is 7-dimethylallyltryptophan synthase hasE.